Here is a 557-residue protein sequence, read N- to C-terminus: Potassium-transporting ATPase potassium-binding subunit (557 aa).

The next 10 membrane-spanning stretches (helical) occupy residues 6–26 (IQLL…GLGL), 59–79 (ALSL…ILFF), 127–147 (AGLT…LLAL), 172–192 (LYVL…FGVV), 247–267 (ISNF…VFLY), 278–298 (WAIF…VWTF), 363–383 (IVFG…LLTV), 410–430 (ILGI…SVSV), 475–495 (VMIA…VLVI), and 520–540 (FYIL…FPVL).

It belongs to the KdpA family. As to quaternary structure, the system is composed of three essential subunits: KdpA, KdpB and KdpC.

It localises to the cell inner membrane. In terms of biological role, part of the high-affinity ATP-driven potassium transport (or Kdp) system, which catalyzes the hydrolysis of ATP coupled with the electrogenic transport of potassium into the cytoplasm. This subunit binds the periplasmic potassium ions and delivers the ions to the membrane domain of KdpB through an intramembrane tunnel. In Leptospira interrogans serogroup Icterohaemorrhagiae serovar Lai (strain 56601), this protein is Potassium-transporting ATPase potassium-binding subunit.